The sequence spans 80 residues: NAD(P)H-quinone oxidoreductase subunit O (80 aa).

The protein belongs to the complex I NdhO subunit family. NDH-1 can be composed of about 15 different subunits; different subcomplexes with different compositions have been identified which probably have different functions.

It is found in the cellular thylakoid membrane. It catalyses the reaction a plastoquinone + NADH + (n+1) H(+)(in) = a plastoquinol + NAD(+) + n H(+)(out). The enzyme catalyses a plastoquinone + NADPH + (n+1) H(+)(in) = a plastoquinol + NADP(+) + n H(+)(out). Its function is as follows. NDH-1 shuttles electrons from an unknown electron donor, via FMN and iron-sulfur (Fe-S) centers, to quinones in the respiratory and/or the photosynthetic chain. The immediate electron acceptor for the enzyme in this species is believed to be plastoquinone. Couples the redox reaction to proton translocation, and thus conserves the redox energy in a proton gradient. Cyanobacterial NDH-1 also plays a role in inorganic carbon-concentration. The sequence is that of NAD(P)H-quinone oxidoreductase subunit O from Prochlorococcus marinus subsp. pastoris (strain CCMP1986 / NIES-2087 / MED4).